We begin with the raw amino-acid sequence, 69 residues long: DNA gyrase inhibitor YacG (69 aa).

4 residues coordinate Zn(2+): C14, C17, C33, and C37. The interval 46 to 69 (ADEEKSIPGAPDMSDSDGWSEDQY) is disordered. Positions 59 to 69 (SDSDGWSEDQY) are enriched in acidic residues.

This sequence belongs to the DNA gyrase inhibitor YacG family. In terms of assembly, interacts with GyrB. Zn(2+) serves as cofactor.

Functionally, inhibits all the catalytic activities of DNA gyrase by preventing its interaction with DNA. Acts by binding directly to the C-terminal domain of GyrB, which probably disrupts DNA binding by the gyrase. This is DNA gyrase inhibitor YacG from Aliivibrio fischeri (strain MJ11) (Vibrio fischeri).